Here is a 160-residue protein sequence, read N- to C-terminus: Cytochrome b6-f complex subunit 4 (160 aa).

3 helical membrane-spanning segments follow: residues 36-56, 95-115, and 131-151; these read LLYI…GLAV, LLGI…PFIE, and TVFL…ALPI.

This sequence belongs to the cytochrome b family. PetD subfamily. In terms of assembly, the 4 large subunits of the cytochrome b6-f complex are cytochrome b6, subunit IV (17 kDa polypeptide, PetD), cytochrome f and the Rieske protein, while the 4 small subunits are PetG, PetL, PetM and PetN. The complex functions as a dimer.

It localises to the cellular thylakoid membrane. Component of the cytochrome b6-f complex, which mediates electron transfer between photosystem II (PSII) and photosystem I (PSI), cyclic electron flow around PSI, and state transitions. The chain is Cytochrome b6-f complex subunit 4 from Parasynechococcus marenigrum (strain WH8102).